The chain runs to 283 residues: Bis(5'-nucleosyl)-tetraphosphatase, symmetrical (283 aa).

The protein belongs to the Ap4A hydrolase family.

The catalysed reaction is P(1),P(4)-bis(5'-adenosyl) tetraphosphate + H2O = 2 ADP + 2 H(+). Its function is as follows. Hydrolyzes diadenosine 5',5'''-P1,P4-tetraphosphate to yield ADP. The polypeptide is Bis(5'-nucleosyl)-tetraphosphatase, symmetrical (Cronobacter sakazakii (strain ATCC BAA-894) (Enterobacter sakazakii)).